A 181-amino-acid chain; its full sequence is Heavy metal-associated isoprenylated plant protein 46 (181 aa).

Residues 2-71 (KQKILIRVTM…KVAFAELVSV (70 aa)) form the HMA domain. Residues 74 to 121 (VEPPKKEDEKKGGDGKGAEGKGGDQKGGDKKGPDDKEPPEPKPVPCYP) are disordered. Basic and acidic residues predominate over residues 75 to 113 (EPPKKEDEKKGGDGKGAEGKGGDQKGGDKKGPDDKEPPE). Cys178 is subject to Cysteine methyl ester. Cys178 is lipidated: S-farnesyl cysteine. Residues 179–181 (KIM) constitute a propeptide, removed in mature form.

The protein belongs to the HIPP family.

Functionally, probable heavy-metal-binding protein. The sequence is that of Heavy metal-associated isoprenylated plant protein 46 from Arabidopsis thaliana (Mouse-ear cress).